The sequence spans 76 residues: Conotoxin ArMKLT2-032 (76 aa).

Residues 1–22 form the signal peptide; that stretch reads MKLTCVLIIAVLFLTACQLTTG. The propeptide occupies 23 to 46; the sequence is ETYSRGEQKDHALRSTDKNSKLTR. A Pyrrolidone carboxylic acid modification is found at glutamine 47. 3 disulfide bridges follow: cysteine 48/cysteine 62, cysteine 55/cysteine 66, and cysteine 61/cysteine 73.

This sequence belongs to the conotoxin O1 superfamily. Expressed by the venom duct.

It localises to the secreted. The sequence is that of Conotoxin ArMKLT2-032 from Conus arenatus (Sand-dusted cone).